The primary structure comprises 503 residues: MAAYASRWRTDCLLRLVFKKTRLSKQVCCEVCKASRGCSTTSTGHTSTSAPWPVYGRLVTHYDSLVHFGSLRKDPQQRTALLQLEELTRVLTDYTNIPILLPQPKDCLQNQPTSELQDKVGSRETVNICRPDENVSNEKEDQQEESSKPHPPQGYYIYGNVGTGKTMLMDLFYSFVENRRKKRVHFNGFMLDVHRRIHKLKQSLPKRRIGKMTMYDPIFPVAMEIAEETCLICFDEFQVVDIADAMILKQLFEGLFKCGVVVVATSNRPPEELYKNGLQRAAFVPFIGVLKEYCRIVSLDTGIDFRTREMKPAGRLYYISSEPDAENAVNALFEELAFRQNDVTRPRVLNVQGREVTLSRTCGTIADCSFQELCEQPLGAGDYLEIARCFDTVIIRNVPYLQLGMKDQARRFTTLIDNFYDQKVRVVMLADAPLDRLLDQGQMTGEEARDRLMLDELGLTDEASKRITLFTADEEIFAFQRTVSRLAEMQTEQYWISGDRSQS.

The interval 108 to 155 (LQNQPTSELQDKVGSRETVNICRPDENVSNEKEDQQEESSKPHPPQGY) is disordered. Basic and acidic residues predominate over residues 130-148 (RPDENVSNEKEDQQEESSK). Position 159-166 (159-166 (GNVGTGKT)) interacts with ATP.

This sequence belongs to the AFG1 ATPase family.

The protein is Lactation elevated protein 1 homolog B (lace1b) of Danio rerio (Zebrafish).